The chain runs to 545 residues: Labda-7,13-dienyl diphosphate synthase (545 aa).

The DXDDTA motif motif lies at 315–320 (DADDTA). The RXXDGSW motif signature appears at 444-450 (RRTDGSW). A disordered region spans residues 526 to 545 (LPAPAPVPPGFDAARTGPAD).

Belongs to the terpene synthase family. Requires Mg(2+) as cofactor.

The catalysed reaction is (2E,6E,10E)-geranylgeranyl diphosphate = (13E)-labda-7,13-dien-15-yl diphosphate. Functionally, involved in the biosynthesis of the labdane-type bicyclic diterpene labda-7,13(16),14-triene. Catalyzes the conversion of geranylgeranyl diphosphate (GGDP) into labda-7,13(E)-dienyl diphosphate. The chain is Labda-7,13-dienyl diphosphate synthase from Streptomyces clavuligerus.